We begin with the raw amino-acid sequence, 739 residues long: Phosphoribosylformylglycinamidine synthase subunit PurL (739 aa).

The active site involves His-52. ATP-binding residues include Tyr-55 and Lys-94. Glu-96 contacts Mg(2+). Substrate-binding positions include 97–100 (SHNH) and Arg-119. Catalysis depends on His-98, which acts as the Proton acceptor. Asp-120 contacts Mg(2+). Gln-243 serves as a coordination point for substrate. A Mg(2+)-binding site is contributed by Asp-273. 317–319 (ESQ) serves as a coordination point for substrate. ATP is bound by residues Asp-500 and Gly-537. A Mg(2+)-binding site is contributed by Asn-538. Ser-540 contributes to the substrate binding site.

It belongs to the FGAMS family. As to quaternary structure, monomer. Part of the FGAM synthase complex composed of 1 PurL, 1 PurQ and 2 PurS subunits.

It is found in the cytoplasm. The catalysed reaction is N(2)-formyl-N(1)-(5-phospho-beta-D-ribosyl)glycinamide + L-glutamine + ATP + H2O = 2-formamido-N(1)-(5-O-phospho-beta-D-ribosyl)acetamidine + L-glutamate + ADP + phosphate + H(+). Its pathway is purine metabolism; IMP biosynthesis via de novo pathway; 5-amino-1-(5-phospho-D-ribosyl)imidazole from N(2)-formyl-N(1)-(5-phospho-D-ribosyl)glycinamide: step 1/2. Functionally, part of the phosphoribosylformylglycinamidine synthase complex involved in the purines biosynthetic pathway. Catalyzes the ATP-dependent conversion of formylglycinamide ribonucleotide (FGAR) and glutamine to yield formylglycinamidine ribonucleotide (FGAM) and glutamate. The FGAM synthase complex is composed of three subunits. PurQ produces an ammonia molecule by converting glutamine to glutamate. PurL transfers the ammonia molecule to FGAR to form FGAM in an ATP-dependent manner. PurS interacts with PurQ and PurL and is thought to assist in the transfer of the ammonia molecule from PurQ to PurL. The polypeptide is Phosphoribosylformylglycinamidine synthase subunit PurL (Enterococcus faecalis (strain ATCC 700802 / V583)).